The sequence spans 989 residues: Presequence protease, mitochondrial (989 aa).

A mitochondrion-targeting transit peptide spans methionine 1–alanine 16. Histidine 84 contributes to the Zn(2+) binding site. Residue glutamate 87 is the Proton acceptor of the active site. Histidine 88 contacts Zn(2+). Glutamate 160 is a catalytic residue. Position 185 (glutamate 185) interacts with Zn(2+). Phosphoserine is present on serine 920. ATP is bound at residue glycine 972–threonine 979.

The protein belongs to the peptidase M16 family. PreP subfamily. Monomer and homodimer; homodimerization is induced by binding of the substrate. Requires Zn(2+) as cofactor.

The protein resides in the mitochondrion intermembrane space. The protein localises to the mitochondrion matrix. Its activity is regulated as follows. Activated by nucleotides, including ATP, GTP, CTP, UTP, and ADP. Activated by copper, manganese, calcium and magnesium ions; copper and manganese restore activity following inactivation by EDTA (ethylenediaminetetraacetic acid). Inhibited by metal chelators including EDTA, EGTA (ethylene glycol bis(2-aminoethyl)tetraacetic acid), and 1,10-phenanthroline. Inhibited by copper, zinc, and iron ions. Also inhibited by dithiothreitol p-mercuribenzenesulfonic acid, N-ethylmaleimide, protoporphyrin, hemin, protamine and triarginine. Degrades mitochondrial transit peptides after their cleavage in the intermembrane space or in the matrix, and presequence peptides; clearance of these peptides is required to keep the presequence processing machinery running. Preferentially cleaves the N-terminal side of paired basic amino acid residues. Also degrades other unstructured peptides. May function as an ATP-dependent peptidase as opposed to a metalloendopeptidase. This is Presequence protease, mitochondrial from Saccharomyces cerevisiae (strain ATCC 204508 / S288c) (Baker's yeast).